Reading from the N-terminus, the 351-residue chain is MVLLPAFLDGLARTVSTKKGKKLSEDEDGGREIAKSMIKDSKKNSTLLGTSGFVSSESSKRFTSICSNRGEKGINQDRAIVWEGFGCQEDITFCGMFDGHGPWGHVIAKRVKKSFPSSLLCQWQQTLASLSSSPECSSPFDLWKQACLKTFSIIDLDLKISPSIDSYCSGCTALTAVLQGDHLVIANAGDSRAVIATTSDDGNGLVPVQLSVDFKPNIPEEAERIKQSDGRLFCLDDEPGVYRVGMPNGGSLGLAVSRAFGDYCLKDFGLVSEPEVTYRKITDKDQFLILATDGMWDVMTNNEAVEIVRGVKERRKSAKRLVERAVTLWRRKRRSIAMDDISVLCLFFRPS.

Residues 62–348 (FTSICSNRGE…DDISVLCLFF (287 aa)) enclose the PPM-type phosphatase domain. Positions 98, 99, 293, and 339 each coordinate Mn(2+).

It belongs to the PP2C family. Mg(2+) serves as cofactor. Requires Mn(2+) as cofactor.

It catalyses the reaction O-phospho-L-seryl-[protein] + H2O = L-seryl-[protein] + phosphate. It carries out the reaction O-phospho-L-threonyl-[protein] + H2O = L-threonyl-[protein] + phosphate. The protein is Probable protein phosphatase 2C 41 of Arabidopsis thaliana (Mouse-ear cress).